We begin with the raw amino-acid sequence, 1161 residues long: Hamartin (1161 aa).

K30 participates in a covalent cross-link: Glycyl lysine isopeptide (Lys-Gly) (interchain with G-Cter in ubiquitin). 2 disordered regions span residues P296 to R336 and C353 to V591. A compositionally biased stretch (low complexity) spans S303–R336. The segment covering T393 to P402 has biased composition (pro residues). A mediates interaction with WDR45B region spans residues Q403 to E784. Residues E471–S484 are compositionally biased toward basic and acidic residues. S484, S502, S508, S518, S592, and S595 each carry phosphoserine. Residues L509–N529 are compositionally biased toward polar residues. Coiled coils occupy residues I721–L849, T879–D917, and E967–D991. Disordered regions lie at residues G1003–S1077 and N1092–S1161. The segment covering H1004–T1017 has biased composition (basic and acidic residues). Low complexity predominate over residues S1026 to S1043. Residues P1064 to S1077 are compositionally biased toward polar residues. S1094 bears the Phosphoserine mark. Positions V1103 to T1113 are enriched in low complexity. Basic and acidic residues-rich tracts occupy residues L1114–T1124 and D1152–S1161.

As to quaternary structure, component of the TSC-TBC complex (also named Rhebulator complex), composed of 2 molecules of TSC1, 2 molecules of TSC2 and 1 molecule of TBC1D7. Probably forms a complex composed of chaperones HSP90 and HSP70, co-chaperones STIP1/HOP, CDC37, PPP5C, PTGES3/p23, TSC1 and client protein TSC2. Forms a complex composed of chaperones HSP90 and HSP70, co-chaperones CDC37, PPP5C, TSC1 and client protein TSC2, CDK4, AKT, RAF1 and NR3C1; this complex does not contain co-chaperones STIP1/HOP and PTGES3/p23. Forms a complex containing HSP90AA1, TSC1 and TSC2; TSC1 is required to recruit TCS2 to the complex. Interacts (via C-terminus) with the closed form of HSP90AA1 (via the middle domain and TPR repeat-binding motif). Interacts with DOCK7. Interacts with FBXW5. Interacts with WDR45B. Interacts with RPAP3 and URI1. In terms of processing, phosphorylation at Ser-502 does not affect interaction with TSC2. 'Lys-63'-linked ubiquitinated at Lys-30 by PELI1; the ubiquitination promotes TSC1/TSC2 complex stability.

It is found in the lysosome membrane. It localises to the cytoplasm. Its subcellular location is the cytosol. Its function is as follows. Non-catalytic component of the TSC-TBC complex, a multiprotein complex that acts as a negative regulator of the canonical mTORC1 complex, an evolutionarily conserved central nutrient sensor that stimulates anabolic reactions and macromolecule biosynthesis to promote cellular biomass generation and growth. The TSC-TBC complex acts as a GTPase-activating protein (GAP) for the small GTPase RHEB, a direct activator of the protein kinase activity of mTORC1. In absence of nutrients, the TSC-TBC complex inhibits mTORC1, thereby preventing phosphorylation of ribosomal protein S6 kinase (RPS6KB1 and RPS6KB2) and EIF4EBP1 (4E-BP1) by the mTORC1 signaling. The TSC-TBC complex is inactivated in response to nutrients, relieving inhibition of mTORC1. Within the TSC-TBC complex, TSC1 stabilizes TSC2 and prevents TSC2 self-aggregation. Involved in microtubule-mediated protein transport via its ability to regulate mTORC1 signaling. Also acts as a co-chaperone for HSP90AA1 facilitating HSP90AA1 chaperoning of protein clients such as kinases, TSC2 and glucocorticoid receptor NR3C1. Increases ATP binding to HSP90AA1 and inhibits HSP90AA1 ATPase activity. Competes with the activating co-chaperone AHSA1 for binding to HSP90AA1, thereby providing a reciprocal regulatory mechanism for chaperoning of client proteins. Recruits TSC2 to HSP90AA1 and stabilizes TSC2 by preventing the interaction between TSC2 and ubiquitin ligase HERC1. The polypeptide is Hamartin (Mus musculus (Mouse)).